Here is a 638-residue protein sequence, read N- to C-terminus: tRNA uridine 5-carboxymethylaminomethyl modification enzyme MnmG (638 aa).

FAD contacts are provided by residues 15–20 (GAGHAG), Ile127, and Ser182. 276–290 (GPRYCPSIEDKIVRF) serves as a coordination point for NAD(+). FAD is bound at residue Gln373.

The protein belongs to the MnmG family. Homodimer. Heterotetramer of two MnmE and two MnmG subunits. The cofactor is FAD.

Its subcellular location is the cytoplasm. In terms of biological role, NAD-binding protein involved in the addition of a carboxymethylaminomethyl (cmnm) group at the wobble position (U34) of certain tRNAs, forming tRNA-cmnm(5)s(2)U34. In Streptococcus suis (strain 98HAH33), this protein is tRNA uridine 5-carboxymethylaminomethyl modification enzyme MnmG.